A 225-amino-acid polypeptide reads, in one-letter code: UPF0173 metal-dependent hydrolase Tneu_1348 (225 aa).

This sequence belongs to the UPF0173 family.

The sequence is that of UPF0173 metal-dependent hydrolase Tneu_1348 from Pyrobaculum neutrophilum (strain DSM 2338 / JCM 9278 / NBRC 100436 / V24Sta) (Thermoproteus neutrophilus).